A 276-amino-acid polypeptide reads, in one-letter code: Putative pyruvate, phosphate dikinase regulatory protein 1 (276 aa).

150–157 (GLPRTSKT) serves as a coordination point for ADP.

Belongs to the pyruvate, phosphate/water dikinase regulatory protein family. PDRP subfamily.

The catalysed reaction is N(tele)-phospho-L-histidyl/L-threonyl-[pyruvate, phosphate dikinase] + ADP = N(tele)-phospho-L-histidyl/O-phospho-L-threonyl-[pyruvate, phosphate dikinase] + AMP + H(+). The enzyme catalyses N(tele)-phospho-L-histidyl/O-phospho-L-threonyl-[pyruvate, phosphate dikinase] + phosphate + H(+) = N(tele)-phospho-L-histidyl/L-threonyl-[pyruvate, phosphate dikinase] + diphosphate. Functionally, bifunctional serine/threonine kinase and phosphorylase involved in the regulation of the pyruvate, phosphate dikinase (PPDK) by catalyzing its phosphorylation/dephosphorylation. This is Putative pyruvate, phosphate dikinase regulatory protein 1 from Syntrophomonas wolfei subsp. wolfei (strain DSM 2245B / Goettingen).